The chain runs to 286 residues: Undecaprenyl-diphosphatase (286 aa).

The next 7 helical transmembrane spans lie at 5–25, 55–75, 92–112, 122–142, 185–205, 229–249, and 264–284; these read WFIIKAIIIGIVEGITEFLPV, IDAFTMIIQLGAILAIVVLYW, SGFKFWLNIAVSAVPAGVLGL, LFNPGSVTAALIVGAIWMIFA, IIGAWIVGLSTVAAAEFSFFL, MHIVGLTVGFIVSFIVALIVV, and FAMYRILLGIVLIILSLFNVI.

Belongs to the UppP family.

Its subcellular location is the cell membrane. The enzyme catalyses di-trans,octa-cis-undecaprenyl diphosphate + H2O = di-trans,octa-cis-undecaprenyl phosphate + phosphate + H(+). Its function is as follows. Catalyzes the dephosphorylation of undecaprenyl diphosphate (UPP). Confers resistance to bacitracin. The protein is Undecaprenyl-diphosphatase of Clostridium novyi (strain NT).